Here is a 113-residue protein sequence, read N- to C-terminus: Probable 4-amino-4-deoxy-L-arabinose-phosphoundecaprenol flippase subunit ArnE (113 aa).

The next 3 membrane-spanning stretches (helical) occupy residues 37–57 (SALK…LFWL), 62–82 (ILPL…VTLA), and 91–111 (AGIK…LMSL). In terms of domain architecture, EamA spans 45 to 111 (AVILLAVGML…IMLGILLMSL (67 aa)).

The protein belongs to the ArnE family. In terms of assembly, heterodimer of ArnE and ArnF.

The protein resides in the cell inner membrane. Its pathway is bacterial outer membrane biogenesis; lipopolysaccharide biosynthesis. Translocates 4-amino-4-deoxy-L-arabinose-phosphoundecaprenol (alpha-L-Ara4N-phosphoundecaprenol) from the cytoplasmic to the periplasmic side of the inner membrane. This Photorhabdus laumondii subsp. laumondii (strain DSM 15139 / CIP 105565 / TT01) (Photorhabdus luminescens subsp. laumondii) protein is Probable 4-amino-4-deoxy-L-arabinose-phosphoundecaprenol flippase subunit ArnE.